The chain runs to 396 residues: Elongation factor Tu (396 aa).

Positions 11 to 205 (KPHVNIGTIG…TVDEYVPTPE (195 aa)) constitute a tr-type G domain. The G1 stretch occupies residues 20–27 (GHVDHGKT). Position 20–27 (20–27 (GHVDHGKT)) interacts with GTP. T27 contributes to the Mg(2+) binding site. The G2 stretch occupies residues 61–65 (GITIN). Residues 82 to 85 (DAPG) are G3. GTP is bound by residues 82-86 (DAPGH) and 137-140 (NKTD). Residues 137 to 140 (NKTD) form a G4 region. The tract at residues 175 to 177 (SAL) is G5.

Belongs to the TRAFAC class translation factor GTPase superfamily. Classic translation factor GTPase family. EF-Tu/EF-1A subfamily. In terms of assembly, monomer.

It is found in the cytoplasm. The enzyme catalyses GTP + H2O = GDP + phosphate + H(+). Its function is as follows. GTP hydrolase that promotes the GTP-dependent binding of aminoacyl-tRNA to the A-site of ribosomes during protein biosynthesis. In Latilactobacillus sakei subsp. sakei (strain 23K) (Lactobacillus sakei subsp. sakei), this protein is Elongation factor Tu.